Here is a 298-residue protein sequence, read N- to C-terminus: MTVEEVSDGSVWSREDDIAFERALANNTDESEERWEKIAADVPGKSVEQIKEHYELLVEDVTRIESGCVPLPAYGSPEGSNGHAGDEGASSKKGGNSHAGESNQAGKSKSDQERRKGIAWTEDEHRLFLLGLDKYGKGDWRSISRNFVVTRTPTQVASHAQKYFIRLNSMNKDRRRSSIHDITSVGNADVSTPQGPITGQNNSNNNNNNNNNNSSPAVAGGGNKSAKQAVSQAPPGPPMYGTPAIGQPAVGTPVNLPAPPHMAYGVHAAPVPGSVVPGAAMNIGQMPYTMPRTPTAHR.

An SANT domain is found at serine 7–threonine 62. Residues cysteine 68–isoleucine 118 are disordered. Residues serine 108–isoleucine 118 are compositionally biased toward basic and acidic residues. The 58-residue stretch at aspartate 111–asparagine 168 folds into the HTH myb-type domain. Positions tryptophan 140 to phenylalanine 164 form a DNA-binding region, H-T-H motif. Residues isoleucine 182–glutamine 200 show a composition bias toward polar residues. Residues isoleucine 182–isoleucine 245 form a disordered region. A compositionally biased stretch (low complexity) spans asparagine 201 to serine 215.

As to expression, expressed in young seedlings, developing leaves, sepals and trichomes.

Its subcellular location is the nucleus. Its function is as follows. Transcription activator that coordinates abscisic acid (ABA) biosynthesis and signaling-related genes via binding to the specific promoter motif 5'-(A/T)AACCAT-3'. Represses ABA-mediated salt (e.g. NaCl and KCl) stress tolerance. Regulates leaf shape and promotes vegetative growth. This Arabidopsis thaliana (Mouse-ear cress) protein is Transcription factor SRM1.